Reading from the N-terminus, the 213-residue chain is Imidazole glycerol phosphate synthase subunit HisH (213 aa).

The region spanning leucine 6–glutamine 213 is the Glutamine amidotransferase type-1 domain. Cysteine 86 serves as the catalytic Nucleophile. Catalysis depends on residues histidine 192 and glutamate 194.

Heterodimer of HisH and HisF.

It localises to the cytoplasm. It carries out the reaction 5-[(5-phospho-1-deoxy-D-ribulos-1-ylimino)methylamino]-1-(5-phospho-beta-D-ribosyl)imidazole-4-carboxamide + L-glutamine = D-erythro-1-(imidazol-4-yl)glycerol 3-phosphate + 5-amino-1-(5-phospho-beta-D-ribosyl)imidazole-4-carboxamide + L-glutamate + H(+). It catalyses the reaction L-glutamine + H2O = L-glutamate + NH4(+). It functions in the pathway amino-acid biosynthesis; L-histidine biosynthesis; L-histidine from 5-phospho-alpha-D-ribose 1-diphosphate: step 5/9. Functionally, IGPS catalyzes the conversion of PRFAR and glutamine to IGP, AICAR and glutamate. The HisH subunit catalyzes the hydrolysis of glutamine to glutamate and ammonia as part of the synthesis of IGP and AICAR. The resulting ammonia molecule is channeled to the active site of HisF. This is Imidazole glycerol phosphate synthase subunit HisH from Hydrogenovibrio crunogenus (strain DSM 25203 / XCL-2) (Thiomicrospira crunogena).